Consider the following 575-residue polypeptide: Transcription factor collier (575 aa).

The tract at residues 79-82 is interaction with DNA; sequence RKSN. Residues 167–186 form a C5-type zinc finger; sequence CRVLLTHEVMCSRCCDKKSC. 2 interaction with DNA regions span residues 213–220 and 252–255; these read NCLKNAGN and NNSK. A disordered region spans residues 255–278; sequence KHGRRAKRLDTTEGTGNTSLSISG. Over residues 266-276 the composition is skewed to polar residues; the sequence is TEGTGNTSLSI. One can recognise an IPT/TIG domain in the interval 299–382; that stretch reads PCIKAISPSE…KGSPGRFVYV (84 aa). 2 disordered regions span residues 456–492 and 546–575; these read GQWT…GSYG and AATA…AAAV. The segment covering 479-492 has biased composition (low complexity); the sequence is SSASTPHSSGGSYG. Basic residues predominate over residues 546-557; it reads AATAHPHHHYPH. Residues 561–575 are compositionally biased toward low complexity; the sequence is PWHNPAVSAATAAAV.

This sequence belongs to the COE family. Its expression at the blastoderm stage is restricted to a single stripe of cells corresponding to part of the intercalary and mandibular segment primordia, possibly parasegment O.

It localises to the nucleus. Its function is as follows. May act as a 'second-level regulator' of head patterning. Required for establishment of the PS(-1)/PS0 parasegmental border and formation of the intercalary segment. Required for expression of the segment polarity genes hedgehog, engrailed and wingless, and the segment-identity genes CAP and collar in the intercalary segment. Required at the onset of the gastrulation for the correct formation of the mandibular segment. The polypeptide is Transcription factor collier (kn) (Drosophila melanogaster (Fruit fly)).